Reading from the N-terminus, the 1470-residue chain is MNPLMFTLLLLFGFLCIQIDGSRLRQEDFPPRIVEHPSDVIVSKGEPTTLNCKAEGRPTPTIEWYKDGERVETDKDDPRSHRMLLPSGSLFFLRIVHGRRSKPDEGSYVCVARNYLGEAVSRNASLEVALLRDDFRQNPTDVVVAAGEPAILECQPPRGHPEPTIYWKKDKVRIDDKEERISIRGGKLMISNTRKSDAGMYTCVGTNMVGERDSDPAELTVFERPTFLRRPINQVVLEEEAVEFRCQVQGDPQPTVRWKKDDADLPRGRYDIKDDYTLRIKKAMSTDEGTYVCIAENRVGKVEASATLTVRVRPVAPPQFVVRPRDQIVAQGRTVTFPCETKGNPQPAVFWQKEGSQNLLFPNQPQQPNSRCSVSPTGDLTITNIQRSDAGYYICQALTVAGSILAKAQLEVTDVLTDRPPPIILQGPINQTLAVDGTALLKCKATGEPLPVISWLKEGFTFLGRDPRATIQDQGTLQIKNLRISDTGTYTCVATSSSGETSWSAVLDVTESGATISKNYDMNDLPGPPSKPQVTDVSKNSVTLSWQPGTPGVLPASAYIIEAFSQSVSNSWQTVANHVKTTLYTVRGLRPNTIYLFMVRAINPQGLSDPSPMSDPVRTQDISPPAQGVDHRQVQKELGDVVVRLHNPVVLTPTTVQVTWTVDRQPQFIQGYRVMYRQTSGLQASTVWQNLDAKVPTERSAVLVNLKKGVTYEIKVRPYFNEFQGMDSESKTVRTTEEAPSAPPQSVTVLTVGSHNSTSISVSWDPPPADHQNGIIQEYKIWCLGNETRFHINKTVDAAIRSVVIGGLFPGIQYRVEVAASTSAGVGVKSEPQPIIIGGRNEVVITENNNSITEQITDVVKQPAFIAGIGGACWVILMGFSIWLYWRRKKRKGLSNYAVTFQRGDGGLMSNGSRPGLLNAGDPNYPWLADSWPATSLPVNNSNSGPNEIGNFGRGDVLPPVPGQGDKTATMLSDGAIYSSIDFTTKTTYNSSSQITQATPYATTQILHSNSIHELAVDLPDPQWKSSVQQKTDLMGFGYSLPDQNKGNNGGKGGKKKKTKNSSKAQKNNGSTWANVPLPPPPVQPLPGTELGHYAAEQENGYDSDSWCPPLPVQTYLHQGMEDELEEDEDRVPTPPVRGVASSPAISFGQQSTATLTPSPREEMQPMLQAHLDELTRAYQFDIAKQTWHIQSNTPPPQPPAPPLGYVSGALISDLETDVPDEDADDEEEPLEIPRPLRALDQTPGSSMDNLDSSVTGKAFSSSQRQRPTSPFSTDSNTSAAQNQSQRPRPTKKHKGGRMDPQPVLPHRREGMPDDLPPPPDPPPGQGLRQQIGLSQHSGNVENSTERKGSSLERQQAANLEDTKSSLDCPAKTVLEWQRQTQDWINSTERQEETRKAPHKQGVGSEESLVPYSKPSFPSPGGHSSSGTSSSKGSTGPRKADVLRGSHQRNANDLLDIGYVGSNSQGQFTE.

A signal peptide spans Met1–Gly21. Residues Ser22 to Pro863 are Extracellular-facing. Ig-like C2-type domains lie at Pro31–Glu127, Asp133–Thr220, Pro225–Thr309, Pro318–Thr413, and Pro422–Asp508. Cysteines 52 and 110 form a disulfide. N-linked (GlcNAc...) asparagine glycosylation is present at Asn123. 3 disulfides stabilise this stretch: Cys154-Cys203, Cys246-Cys293, and Cys339-Cys395. N-linked (GlcNAc...) asparagine glycosylation is present at Asn430. A disulfide bridge connects residues Cys443 and Cys492. Fibronectin type-III domains lie at Pro528–Ile622, Val641–Ala739, and Pro743–Arg840. Residues Asn756, Asn786, Asn793, and Asn849 are each glycosylated (N-linked (GlcNAc...) asparagine). A helical transmembrane segment spans residues Ala864–Leu884. Residues Tyr885–Glu1470 are Cytoplasmic-facing. Disordered stretches follow at residues Gly1036–Thr1089, Glu1129–Ser1159, Ile1190–Ala1371, and Asp1383–Glu1470. Positions Pro1144–Pro1158 are enriched in polar residues. Thr1157 carries the post-translational modification Phosphothreonine. Phosphoserine is present on Ser1159. Over residues Thr1194 to Pro1203 the composition is skewed to pro residues. Residues Leu1215–Leu1231 are compositionally biased toward acidic residues. A compositionally biased stretch (polar residues) spans Thr1243 to Pro1288. Positions Asp1315–Gly1325 are enriched in pro residues. Positions Leu1328–Asn1343 are enriched in polar residues. Positions Ser1413–Pro1437 are enriched in low complexity. Residues Gly1461 to Glu1470 are compositionally biased toward polar residues.

The protein belongs to the immunoglobulin superfamily. ROBO family. In terms of assembly, interacts with SLIT2. As to expression, expressed in embryonal spinal cord.

It is found in the membrane. Functionally, receptor for SLIT2, and probably SLIT1, which are thought to act as molecular guidance cue in cellular migration, including axonal navigation at the ventral midline of the neural tube and projection of axons to different regions during neuronal development. This is Roundabout homolog 2 (Robo2) from Mus musculus (Mouse).